The primary structure comprises 254 residues: Glc operon transcriptional activator (254 aa).

In terms of domain architecture, HTH gntR-type spans 6-74 (RPICEVVAES…QGRDSRVARL (69 aa)). Residues 34–53 (ERRLCEKLGFSRSALREGLT) constitute a DNA-binding region (H-T-H motif).

Transcriptional activator of the glcDEFGB operon which is associated with glycolate utilization, and encodes malate synthase G and the genes needed for glycolate oxidase activity. Also negatively regulates the transcription of its own gene. Glycolate acts as an effector, but GlcC can also use acetate as an alternative effector. This chain is Glc operon transcriptional activator (glcC), found in Escherichia coli O6:H1 (strain CFT073 / ATCC 700928 / UPEC).